Consider the following 510-residue polypeptide: MEIRPAEISEILKKQIASFDTETDVAETGQVLSVGDGIARVFGLANVMAGEMVEFPNAGVQGMALNLENDNVGVVVFGDDKAIREGDTVTRTRRIVDVPVGKGLLGRVVDALGNPIDGKGPIEATERRLVETKAPGIIPRKSVHEPMQTGVKSIDALIPIGRGQRELVIGDRQTGKTAIIVDTFINQKPLNAQDDESKKLYCIYVAVGQKRSTVAQLVRTLEENGAMEYSIVIAATASEPAPMQFLAPYTGCAMGEYFRDNGMHALIVYDDLSKQAVAYRQMSLLLRRPPGREAYPGDVFYLHSRLLERAAKMSDEFGAGSLTALPVIETQAGDISAYIPTNVISITDGQIFLETELFFKGIRPAVNVGNSVSRVGSAAQIKAMKQVAGKIKLDLAQYREMAAFAQFASDLDASTQKLLARGARLTELLKQPQFKPLPVEEQVVSIFVGTRGYLDEVPVNRIGDFEAQLISEMKARSPEILDSIRNDREIKKETETKLVDFVKSFASSFA.

An ATP-binding site is contributed by 170-177 (GDRQTGKT).

It belongs to the ATPase alpha/beta chains family. As to quaternary structure, F-type ATPases have 2 components, CF(1) - the catalytic core - and CF(0) - the membrane proton channel. CF(1) has five subunits: alpha(3), beta(3), gamma(1), delta(1), epsilon(1). CF(0) has three main subunits: a(1), b(2) and c(9-12). The alpha and beta chains form an alternating ring which encloses part of the gamma chain. CF(1) is attached to CF(0) by a central stalk formed by the gamma and epsilon chains, while a peripheral stalk is formed by the delta and b chains.

It is found in the cell inner membrane. The enzyme catalyses ATP + H2O + 4 H(+)(in) = ADP + phosphate + 5 H(+)(out). Its function is as follows. Produces ATP from ADP in the presence of a proton gradient across the membrane. The alpha chain is a regulatory subunit. The polypeptide is ATP synthase subunit alpha (Acidiphilium cryptum (strain JF-5)).